The chain runs to 570 residues: Urease subunit alpha (570 aa).

Residues 131–570 enclose the Urease domain; sequence GGFDAHIHFI…LPMAQRYFLF (440 aa). Positions 136, 138, and 219 each coordinate Ni(2+). Lysine 219 carries the post-translational modification N6-carboxylysine. Histidine 221 serves as a coordination point for substrate. Histidine 248 and histidine 274 together coordinate Ni(2+). Histidine 322 acts as the Proton donor in catalysis. Aspartate 362 provides a ligand contact to Ni(2+).

This sequence belongs to the metallo-dependent hydrolases superfamily. Urease alpha subunit family. Heterotrimer of UreA (gamma), UreB (beta) and UreC (alpha) subunits. Three heterotrimers associate to form the active enzyme. Ni cation is required as a cofactor. Carboxylation allows a single lysine to coordinate two nickel ions.

It localises to the cytoplasm. It carries out the reaction urea + 2 H2O + H(+) = hydrogencarbonate + 2 NH4(+). It participates in nitrogen metabolism; urea degradation; CO(2) and NH(3) from urea (urease route): step 1/1. This chain is Urease subunit alpha, found in Chelativorans sp. (strain BNC1).